We begin with the raw amino-acid sequence, 97 residues long: Aspartyl/glutamyl-tRNA(Asn/Gln) amidotransferase subunit C (97 aa).

The protein belongs to the GatC family. Heterotrimer of A, B and C subunits.

The enzyme catalyses L-glutamyl-tRNA(Gln) + L-glutamine + ATP + H2O = L-glutaminyl-tRNA(Gln) + L-glutamate + ADP + phosphate + H(+). The catalysed reaction is L-aspartyl-tRNA(Asn) + L-glutamine + ATP + H2O = L-asparaginyl-tRNA(Asn) + L-glutamate + ADP + phosphate + 2 H(+). Its function is as follows. Allows the formation of correctly charged Asn-tRNA(Asn) or Gln-tRNA(Gln) through the transamidation of misacylated Asp-tRNA(Asn) or Glu-tRNA(Gln) in organisms which lack either or both of asparaginyl-tRNA or glutaminyl-tRNA synthetases. The reaction takes place in the presence of glutamine and ATP through an activated phospho-Asp-tRNA(Asn) or phospho-Glu-tRNA(Gln). The sequence is that of Aspartyl/glutamyl-tRNA(Asn/Gln) amidotransferase subunit C from Synechococcus sp. (strain JA-3-3Ab) (Cyanobacteria bacterium Yellowstone A-Prime).